A 324-amino-acid chain; its full sequence is MMLMTLVDEIKNRSSHVDAAIDELLPVTRPEELYKASRYLVDAGGKRLRPAVLILAAEAVGSNLRSVLPAAVAVELVHNFTLIHDDIMDRDDIRRGMPAVHVKWGEAGAILAGDTLYSKAFEILSKVENEPVRVLKCMDVLSKTCTEICEGQWLDMDFETRKKVTESEYLEMVEKKTSVLYAAAAKIGALLGGASDEVAEALSEYGRLIGIGFQMYDDVLDMTAPEEVLGKVRGSDLMEGKYTLIVINAFEKGVKLDIFGKGEATLEETEAAVRTLTECGSLDYVKNLAISYIEEGKEKLDVLRDCPEKTLLLQIADYMISREY.

The isopentenyl diphosphate site is built by Lys46, Arg49, and His78. Positions 85 and 89 each coordinate Mg(2+). Position 94 (Arg94) interacts with an all-trans-polyprenyl diphosphate. Arg95 lines the isopentenyl diphosphate pocket. Residues Lys176, Thr177, Gln214, Lys231, and Lys241 each contribute to the an all-trans-polyprenyl diphosphate site.

The protein belongs to the FPP/GGPP synthase family. Mg(2+) serves as cofactor.

It carries out the reaction isopentenyl diphosphate + (2E,6E)-farnesyl diphosphate = (2E,6E,10E)-geranylgeranyl diphosphate + diphosphate. The protein operates within isoprenoid biosynthesis; geranylgeranyl diphosphate biosynthesis; geranylgeranyl diphosphate from farnesyl diphosphate and isopentenyl diphosphate: step 1/1. In terms of biological role, catalyzes the sequential condensation of isopentenyl pyrophosphate with the allylic pyrophosphates to yield geranylgeranyl diphosphate (GGPP) which is a precursor of the ether-linked lipids. The protein is Geranylgeranyl diphosphate synthase of Methanosarcina mazei (strain ATCC BAA-159 / DSM 3647 / Goe1 / Go1 / JCM 11833 / OCM 88) (Methanosarcina frisia).